The following is a 57-amino-acid chain: Small ribosomal subunit protein bS21 (57 aa).

Residues 31–57 (EVRKRKHYEKPSVRRKKKSEAARKRKF) are disordered. Positions 33 to 57 (RKRKHYEKPSVRRKKKSEAARKRKF) are enriched in basic residues.

The protein belongs to the bacterial ribosomal protein bS21 family.

The sequence is that of Small ribosomal subunit protein bS21 (rpsU) from Halalkalibacterium halodurans (strain ATCC BAA-125 / DSM 18197 / FERM 7344 / JCM 9153 / C-125) (Bacillus halodurans).